The sequence spans 373 residues: Putative 8-amino-7-oxononanoate synthase (373 aa).

Position 18 (Arg18) interacts with substrate. 93–94 contacts pyridoxal 5'-phosphate; sequence GF. His118 lines the substrate pocket. Pyridoxal 5'-phosphate-binding positions include Ser166, 191–194, and 220–223; these read DEAH and TLSK. An N6-(pyridoxal phosphate)lysine modification is found at Lys223. Residue Thr337 participates in substrate binding.

The protein belongs to the class-II pyridoxal-phosphate-dependent aminotransferase family. BioF subfamily. As to quaternary structure, homodimer. The cofactor is pyridoxal 5'-phosphate.

It catalyses the reaction 6-carboxyhexanoyl-[ACP] + L-alanine + H(+) = (8S)-8-amino-7-oxononanoate + holo-[ACP] + CO2. It functions in the pathway cofactor biosynthesis; biotin biosynthesis. Its function is as follows. Catalyzes the decarboxylative condensation of pimeloyl-[acyl-carrier protein] and L-alanine to produce 8-amino-7-oxononanoate (AON), [acyl-carrier protein], and carbon dioxide. The protein is Putative 8-amino-7-oxononanoate synthase (bioF) of Aquifex aeolicus (strain VF5).